A 280-amino-acid polypeptide reads, in one-letter code: Tobamovirus multiplication protein 2A (280 aa).

Topologically, residues 1-13 (MACRGCLECLLKL) are cytoplasmic. The helical transmembrane segment at 14–34 (LNFLLAVAGLGMIGYGIYLFV) threads the bilayer. Residues 35-78 (EYKRVTDNSVTFDLTNGDQSYVSFGRPILMAVSLSSNIFDNLPK) are Extracellular-facing. Residues 79 to 99 (AWFIYLFIGIGVALFVISCCG) traverse the membrane as a helical segment. Over 100-113 (CVGTCSRSVCCLSC) the chain is Cytoplasmic. The chain crosses the membrane as a helical span at residues 114–134 (YSLLLILLILVELGFAAFIFF). Topologically, residues 135-162 (DNSWRDELPSDRTGNFDTIYNFLRENWK) are extracellular. Residues 163-183 (IVRWVALGAVVFEALLFLLAL) traverse the membrane as a helical segment. Over 184–280 (MVRAANTPAE…NEEKGRCTIM (97 aa)) the chain is Cytoplasmic. Phosphoserine is present on residues serine 196 and serine 233. The disordered stretch occupies residues 258–280 (SESHRFQQMPAQPNEEKGRCTIM). The span at 271–280 (NEEKGRCTIM) shows a compositional bias: basic and acidic residues.

This sequence belongs to the tetraspanin (TM4SF) family. In terms of assembly, homodimer. Constituent of tobamovirus replication complex. Interacts with TOM1. In terms of tissue distribution, expressed in rosette leaves.

It is found in the vacuole membrane. Its function is as follows. Necessary for the efficient intracellular multiplication of tobamoviruses, being a component of the replication complex. The protein is Tobamovirus multiplication protein 2A (TOM2A) of Arabidopsis thaliana (Mouse-ear cress).